We begin with the raw amino-acid sequence, 293 residues long: Large ribosomal subunit protein uL18 (293 aa).

The tract at residues 249–273 (DASPAAKKAAKPSKRHTAKRLTYDE) is disordered. The span at 256–267 (KAAKPSKRHTAK) shows a compositional bias: basic residues.

This sequence belongs to the universal ribosomal protein uL18 family. In terms of assembly, component of the large ribosomal subunit (LSU).

The protein localises to the cytoplasm. Its subcellular location is the nucleus. Functionally, component of the ribosome, a large ribonucleoprotein complex responsible for the synthesis of proteins in the cell. The small ribosomal subunit (SSU) binds messenger RNAs (mRNAs) and translates the encoded message by selecting cognate aminoacyl-transfer RNA (tRNA) molecules. The large subunit (LSU) contains the ribosomal catalytic site termed the peptidyl transferase center (PTC), which catalyzes the formation of peptide bonds, thereby polymerizing the amino acids delivered by tRNAs into a polypeptide chain. The nascent polypeptides leave the ribosome through a tunnel in the LSU and interact with protein factors that function in enzymatic processing, targeting, and the membrane insertion of nascent chains at the exit of the ribosomal tunnel. This chain is Large ribosomal subunit protein uL18 (rpl-5), found in Caenorhabditis elegans.